A 240-amino-acid polypeptide reads, in one-letter code: Phosphoribosylaminoimidazole-succinocarboxamide synthase (240 aa).

It belongs to the SAICAR synthetase family.

The catalysed reaction is 5-amino-1-(5-phospho-D-ribosyl)imidazole-4-carboxylate + L-aspartate + ATP = (2S)-2-[5-amino-1-(5-phospho-beta-D-ribosyl)imidazole-4-carboxamido]succinate + ADP + phosphate + 2 H(+). The protein operates within purine metabolism; IMP biosynthesis via de novo pathway; 5-amino-1-(5-phospho-D-ribosyl)imidazole-4-carboxamide from 5-amino-1-(5-phospho-D-ribosyl)imidazole-4-carboxylate: step 1/2. This is Phosphoribosylaminoimidazole-succinocarboxamide synthase from Wolbachia pipientis subsp. Culex pipiens (strain wPip).